Here is a 436-residue protein sequence, read N- to C-terminus: Histidine--tRNA ligase 1 (436 aa).

The protein belongs to the class-II aminoacyl-tRNA synthetase family. As to quaternary structure, homodimer.

It localises to the cytoplasm. The enzyme catalyses tRNA(His) + L-histidine + ATP = L-histidyl-tRNA(His) + AMP + diphosphate + H(+). This is Histidine--tRNA ligase 1 from Bacillus cereus (strain ATCC 10987 / NRS 248).